A 316-amino-acid chain; its full sequence is Small ribosomal subunit protein RACK1 (316 aa).

7 WD repeats span residues 13-44 (GHNGWVTSLATSLENPNMLLSGSRDKSLIIWN), 61-91 (GHSHIVSDCVISSDGAYALSASWDKTLRLWE), 103-133 (GHTNDVLSVSFSADNRQIVSGSRDRTIKLWN), 146-178 (GHTEWVSCVRFSPNPQNPVIVSSGWDKLVKVWE), 190-220 (GHTGYINAVTISPDGSLCASGGKDGTTMLWD), 231-260 (NANDEIHALVFSPNRYWLCAATSSSIIIFD), and 281-311 (SREPECVSLAWSADGQTLFAGYTDNIIRAWG).

This sequence belongs to the WD repeat G protein beta family. Ribosomal protein RACK1 subfamily. As to quaternary structure, component of the small ribosomal subunit (SSU). Mature N.crassa ribosomes consist of a small (40S) and a large (60S) subunit. The 40S small subunit contains 1 molecule of ribosomal RNA (18S rRNA) and at least 32 different proteins. The large 60S subunit contains 3 rRNA molecules (26S, 5.8S and 5S rRNA) and at least 42 different proteins.

The protein resides in the cytoplasm. Component of the ribosome, a large ribonucleoprotein complex responsible for the synthesis of proteins in the cell. The small ribosomal subunit (SSU) binds messenger RNAs (mRNAs) and translates the encoded message by selecting cognate aminoacyl-transfer RNA (tRNA) molecules. The large subunit (LSU) contains the ribosomal catalytic site termed the peptidyl transferase center (PTC), which catalyzes the formation of peptide bonds, thereby polymerizing the amino acids delivered by tRNAs into a polypeptide chain. The nascent polypeptides leave the ribosome through a tunnel in the LSU and interact with protein factors that function in enzymatic processing, targeting, and the membrane insertion of nascent chains at the exit of the ribosomal tunnel. Required to activate general amino acid control under conditions of amino acid limitation in the vegetative growth phase, and for formation of protoperithecia in preparation for the sexual phase of the life cycle of N.crassa. This is Small ribosomal subunit protein RACK1 (cpc-2) from Neurospora crassa (strain ATCC 24698 / 74-OR23-1A / CBS 708.71 / DSM 1257 / FGSC 987).